A 314-amino-acid polypeptide reads, in one-letter code: Lipoyl synthase (314 aa).

Cysteine 67, cysteine 72, cysteine 78, cysteine 93, cysteine 97, cysteine 100, and serine 306 together coordinate [4Fe-4S] cluster. The Radical SAM core domain occupies 79-295 (FNRGTATFMI…KNYALSIGFK (217 aa)).

Belongs to the radical SAM superfamily. Lipoyl synthase family. Requires [4Fe-4S] cluster as cofactor.

The protein resides in the cytoplasm. It catalyses the reaction [[Fe-S] cluster scaffold protein carrying a second [4Fe-4S](2+) cluster] + N(6)-octanoyl-L-lysyl-[protein] + 2 oxidized [2Fe-2S]-[ferredoxin] + 2 S-adenosyl-L-methionine + 4 H(+) = [[Fe-S] cluster scaffold protein] + N(6)-[(R)-dihydrolipoyl]-L-lysyl-[protein] + 4 Fe(3+) + 2 hydrogen sulfide + 2 5'-deoxyadenosine + 2 L-methionine + 2 reduced [2Fe-2S]-[ferredoxin]. It functions in the pathway protein modification; protein lipoylation via endogenous pathway; protein N(6)-(lipoyl)lysine from octanoyl-[acyl-carrier-protein]: step 2/2. In terms of biological role, catalyzes the radical-mediated insertion of two sulfur atoms into the C-6 and C-8 positions of the octanoyl moiety bound to the lipoyl domains of lipoate-dependent enzymes, thereby converting the octanoylated domains into lipoylated derivatives. This Buchnera aphidicola subsp. Baizongia pistaciae (strain Bp) protein is Lipoyl synthase.